Here is a 1052-residue protein sequence, read N- to C-terminus: Kinesin-like protein KIF11 (1052 aa).

A Kinesin motor domain is found at 17–358 (NIQVVVRCRP…LEYAHRAKNI (342 aa)). 104–111 (GQTGTGKT) serves as a coordination point for ATP. An N6-acetyllysine modification is found at Lys-145. Residues 364 to 478 (VNQKLTKKAL…ETKLQLVKEE (115 aa)) are a coiled coil. Thr-457 is subject to Phosphothreonine. A Glycyl lysine isopeptide (Lys-Gly) (interchain with G-Cter in SUMO2) cross-link involves residue Lys-476. Thr-925 bears the Phosphothreonine mark. 2 disordered regions span residues 950-1026 (LQKK…LNPV) and 1033-1052 (EASD…SINL). A coiled-coil region spans residues 963–988 (EASKETSQDMDEEREALEQCTEELVS). The segment covering 1016-1026 (KDKENRGLNPV) has biased composition (basic and acidic residues).

The protein belongs to the TRAFAC class myosin-kinesin ATPase superfamily. Kinesin family. BimC subfamily. As to quaternary structure, interacts with the thyroid hormone receptor in the presence of thyroid hormone. Component of a large chromatin remodeling complex, at least composed of MYSM1, PCAF, RBM10 and KIF11/TRIP5. Interacts with RARRES1 and AGBL2. In terms of processing, phosphorylated exclusively on serine during S phase, but on both serine and Thr-925 during mitosis, so controlling the association of KIF11 with the spindle apparatus (probably during early prophase).

Its subcellular location is the cytoplasm. It is found in the cytoskeleton. The protein localises to the spindle pole. Functionally, motor protein required for establishing a bipolar spindle during mitosis. Required in non-mitotic cells for transport of secretory proteins from the Golgi complex to the cell surface. The protein is Kinesin-like protein KIF11 (Kif11) of Mus musculus (Mouse).